The following is a 340-amino-acid chain: Uroporphyrinogen decarboxylase (340 aa).

Substrate contacts are provided by residues 21-25 (RQAGR), Asp71, Tyr148, Ser203, and His316.

The protein belongs to the uroporphyrinogen decarboxylase family. In terms of assembly, homodimer.

Its subcellular location is the cytoplasm. It carries out the reaction uroporphyrinogen III + 4 H(+) = coproporphyrinogen III + 4 CO2. It participates in porphyrin-containing compound metabolism; protoporphyrin-IX biosynthesis; coproporphyrinogen-III from 5-aminolevulinate: step 4/4. Its function is as follows. Catalyzes the decarboxylation of four acetate groups of uroporphyrinogen-III to yield coproporphyrinogen-III. This is Uroporphyrinogen decarboxylase from Campylobacter concisus (strain 13826).